A 636-amino-acid chain; its full sequence is MNGSMGAAGGQVENERAAEVPVSTLEMRTLSPETFLYTEVARSHLGERAGRVIELLLNKGRLSVSELVHLAPELGSKSVRTVLVSLIQLRCVQYLEETTVSGRKITYYYFNEDGFQLMLYAGDIVAAVESQFEADDAKEIAAQIVQNVLALGSLTTKDYMQSLASDVSVNDVASMFVKLVELGFLVPLSNVHYMPLADLWDVLYKKEYNAIPKNSTLSDAKKRAETKAKTKVQFNTLLKNVEMSNVLMTDMQTSMRRVQDNLPLTFNFGRYMKHRRSRQLVQFARSRVGSVPAMIYKVALKITEQCARALSDPLCETGLMQELEEQLAIQEDMALDDEKLPGVTFNAVDISRNLPNNIDLRGTLTSMQRRSQERSTHQGQSHKRLKAEDGMAVAVNHLATVEEEAEGDELLHGSDDDMDMFFDEGDSDPKSVSLINGHLKLLSTGSVPFLIESRPGLFYVPYSKLMPILKEAVYDAIIASTLGPSAHRILRCVRDNSLVSEKVINNTALMREKDIRSVIATLVKYNAVDILEVPRTADRAASRAVFLFKINEKHAYDFMKQNLAWNIANSIHKTEILKEENFTLLSKAQRDDVKGREAELLLPSELNQLKMVNERELNGHARKIRLLSMWEVFKML.

Positions 366 to 385 are disordered; the sequence is SMQRRSQERSTHQGQSHKRL. Positions 563–584 are leucine-zipper; that stretch reads LAWNIANSIHKTEILKEENFTL.

This sequence belongs to the RNA polymerase beta chain family. Component of the RNA polymerase III (Pol III) complex consisting of 17 subunits.

The protein resides in the nucleus. In terms of biological role, DNA-dependent RNA polymerase catalyzes the transcription of DNA into RNA using the four ribonucleoside triphosphates as substrates. Specific core component of RNA polymerase III which synthesizes small RNAs, such as 5S rRNA and tRNAs. This Eremothecium gossypii (strain ATCC 10895 / CBS 109.51 / FGSC 9923 / NRRL Y-1056) (Yeast) protein is DNA-directed RNA polymerase III subunit RPC3 (RPC82).